The chain runs to 81 residues: MSHSVKIYDTCIGCTQCVRACPTDVLEMIPWDGCKAKQIASAPRTEDCVGCKRCESACPTDFLSVRVYLWHETTRSMGLGY.

2 4Fe-4S ferredoxin-type domains span residues 2 to 31 (SHSVKIYDTCIGCTQCVRACPTDVLEMIPW) and 39 to 68 (IASAPRTEDCVGCKRCESACPTDFLSVRVY). [4Fe-4S] cluster-binding residues include cysteine 11, cysteine 14, cysteine 17, cysteine 21, cysteine 48, cysteine 51, cysteine 54, and cysteine 58.

The eukaryotic PSI reaction center is composed of at least 11 subunits. [4Fe-4S] cluster is required as a cofactor.

The protein localises to the plastid. It is found in the chloroplast thylakoid membrane. The catalysed reaction is reduced [plastocyanin] + hnu + oxidized [2Fe-2S]-[ferredoxin] = oxidized [plastocyanin] + reduced [2Fe-2S]-[ferredoxin]. Its function is as follows. Apoprotein for the two 4Fe-4S centers FA and FB of photosystem I (PSI); essential for photochemical activity. FB is the terminal electron acceptor of PSI, donating electrons to ferredoxin. The C-terminus interacts with PsaA/B/D and helps assemble the protein into the PSI complex. Required for binding of PsaD and PsaE to PSI. PSI is a plastocyanin-ferredoxin oxidoreductase, converting photonic excitation into a charge separation, which transfers an electron from the donor P700 chlorophyll pair to the spectroscopically characterized acceptors A0, A1, FX, FA and FB in turn. The chain is Photosystem I iron-sulfur center from Spinacia oleracea (Spinach).